The sequence spans 259 residues: Acyl-[acyl-carrier-protein]--UDP-N-acetylglucosamine O-acyltransferase (259 aa).

The protein belongs to the transferase hexapeptide repeat family. LpxA subfamily. Homotrimer.

The protein localises to the cytoplasm. It catalyses the reaction a (3R)-hydroxyacyl-[ACP] + UDP-N-acetyl-alpha-D-glucosamine = a UDP-3-O-[(3R)-3-hydroxyacyl]-N-acetyl-alpha-D-glucosamine + holo-[ACP]. It participates in glycolipid biosynthesis; lipid IV(A) biosynthesis; lipid IV(A) from (3R)-3-hydroxytetradecanoyl-[acyl-carrier-protein] and UDP-N-acetyl-alpha-D-glucosamine: step 1/6. Involved in the biosynthesis of lipid A, a phosphorylated glycolipid that anchors the lipopolysaccharide to the outer membrane of the cell. The protein is Acyl-[acyl-carrier-protein]--UDP-N-acetylglucosamine O-acyltransferase of Akkermansia muciniphila (strain ATCC BAA-835 / DSM 22959 / JCM 33894 / BCRC 81048 / CCUG 64013 / CIP 107961 / Muc).